Here is an 81-residue protein sequence, read N- to C-terminus: Cytochrome b559 subunit alpha (81 aa).

A helical transmembrane segment spans residues 21 to 35 (VIHSVTIPSLFVGGW). His-23 contacts heme.

This sequence belongs to the PsbE/PsbF family. As to quaternary structure, heterodimer of an alpha subunit and a beta subunit. PSII is composed of 1 copy each of membrane proteins PsbA, PsbB, PsbC, PsbD, PsbE, PsbF, PsbH, PsbI, PsbJ, PsbK, PsbL, PsbM, PsbT, PsbY, PsbZ, Psb30/Ycf12, at least 3 peripheral proteins of the oxygen-evolving complex and a large number of cofactors. It forms dimeric complexes. Heme b is required as a cofactor.

The protein resides in the plastid. It is found in the chloroplast thylakoid membrane. In terms of biological role, this b-type cytochrome is tightly associated with the reaction center of photosystem II (PSII). PSII is a light-driven water:plastoquinone oxidoreductase that uses light energy to abstract electrons from H(2)O, generating O(2) and a proton gradient subsequently used for ATP formation. It consists of a core antenna complex that captures photons, and an electron transfer chain that converts photonic excitation into a charge separation. The protein is Cytochrome b559 subunit alpha of Euglena gracilis.